Reading from the N-terminus, the 271-residue chain is Phosphonoacetaldehyde hydrolase (271 aa).

D12 functions as the Nucleophile in the catalytic mechanism. The Mg(2+) site is built by D12 and A14. The active-site Schiff-base intermediate with substrate is K54. Position 188 (D188) interacts with Mg(2+).

This sequence belongs to the HAD-like hydrolase superfamily. PhnX family. As to quaternary structure, homodimer. Mg(2+) serves as cofactor.

The catalysed reaction is phosphonoacetaldehyde + H2O = acetaldehyde + phosphate + H(+). In terms of biological role, involved in phosphonate degradation. The sequence is that of Phosphonoacetaldehyde hydrolase from Vibrio parahaemolyticus serotype O3:K6 (strain RIMD 2210633).